Here is a 253-residue protein sequence, read N- to C-terminus: 3-dehydroquinate dehydratase (253 aa).

Residues 46-48 (EFR) and arginine 82 each bind 3-dehydroquinate. The Proton donor/acceptor role is filled by histidine 143. The Schiff-base intermediate with substrate role is filled by lysine 170. 3-dehydroquinate contacts are provided by arginine 213, serine 232, and glutamine 236.

The protein belongs to the type-I 3-dehydroquinase family. As to quaternary structure, homodimer.

It catalyses the reaction 3-dehydroquinate = 3-dehydroshikimate + H2O. The protein operates within metabolic intermediate biosynthesis; chorismate biosynthesis; chorismate from D-erythrose 4-phosphate and phosphoenolpyruvate: step 3/7. Its function is as follows. Involved in the third step of the chorismate pathway, which leads to the biosynthesis of aromatic amino acids. Catalyzes the cis-dehydration of 3-dehydroquinate (DHQ) and introduces the first double bond of the aromatic ring to yield 3-dehydroshikimate. In Clostridium novyi (strain NT), this protein is 3-dehydroquinate dehydratase.